The primary structure comprises 490 residues: Type I restriction enzyme EcoEI methylase subunit (490 aa).

Residues 163–168 (EFYTPR), 193–195 (TGG), and Glu-226 each bind S-adenosyl-L-methionine.

Belongs to the N(4)/N(6)-methyltransferase family. In terms of assembly, the type I restriction/modification system is composed of three polypeptides R, M and S; the restriction enzyme has stoichiometry R(2)M(2)S(1) while the methyltransferase is M(2)S(1).

The catalysed reaction is a 2'-deoxyadenosine in DNA + S-adenosyl-L-methionine = an N(6)-methyl-2'-deoxyadenosine in DNA + S-adenosyl-L-homocysteine + H(+). In terms of biological role, the subtype gamma methyltransferase (M) subunit of a type I restriction enzyme. The M and S subunits together form a methyltransferase (MTase) that methylates two adenine residues of the sequence 5'-GAGN(7)ATGC-3'. In the presence of the R subunit the complex can also act as an endonuclease, binding to the same target sequence but cutting the DNA some distance from this site. Whether the DNA is cut or modified depends on the methylation state of the target sequence. When the target site is unmodified, the DNA is cut. When the target site is hemimethylated, the complex acts as a maintenance MTase modifying the DNA so that both strands become methylated. After locating a non-methylated recognition site, the enzyme complex serves as a molecular motor that translocates DNA in an ATP-dependent manner until a collision occurs that triggers cleavage. The protein is Type I restriction enzyme EcoEI methylase subunit (hsdM) of Escherichia coli.